We begin with the raw amino-acid sequence, 20 residues long: DLPECCSATELELDSGKQTS.

The interval 1-20 is disordered; it reads DLPECCSATELELDSGKQTS.

In terms of biological role, may have antimicrobial activity. The chain is Putative antimicrobial protein 2 from Cenchritis muricatus (Beaded periwinkle).